The sequence spans 340 residues: Cysteinyl leukotriene receptor 1 (340 aa).

Residues 1–31 (MDGVRNLTVSCASSNTCNDTIDDFRNQVYST) are Extracellular-facing. 2 N-linked (GlcNAc...) asparagine glycosylation sites follow: N6 and N18. A helical transmembrane segment spans residues 32–52 (LYSMITVVGFFGNGFVLYVLI). The Cytoplasmic segment spans residues 53–60 (KTYHEKSA). Residues 61–81 (YQVYMINLAVADLLCVCTLPL) traverse the membrane as a helical segment. The Extracellular portion of the chain corresponds to 82 to 109 (RVVYYVHKGIWLFGDFLCRLSTYALYVN). C99 and C176 form a disulfide bridge. The helical transmembrane segment at 110 to 130 (LYCSIFFMTAMSFFRCIAIVF) threads the bilayer. The Cytoplasmic segment spans residues 131–144 (PVQNINLITHKKAK). A helical membrane pass occupies residues 145 to 165 (IVCIAIWIFVILTSSPFLMST). Topologically, residues 166–196 (SYKDEKNNTKCFEPPQXNQAKYHVLVLHYVS) are extracellular. N172 is a glycosylation site (N-linked (GlcNAc...) asparagine). The helical transmembrane segment at 197–217 (LFVGFIIPFVIIIVCYTMIIL) threads the bilayer. The Cytoplasmic segment spans residues 218–233 (TLLKNSMKKNISSRKK). A helical membrane pass occupies residues 234 to 254 (AIGMIIVVTAAFLISFMPYHI). The Extracellular portion of the chain corresponds to 255 to 279 (QRTIHLHFLHNDTKHCDSVLRMQKS). A glycan (N-linked (GlcNAc...) asparagine) is linked at N265. Residues 280-300 (VXITLSLAASNCCFDPLLYFF) traverse the membrane as a helical segment. Over 301-340 (SGGNFREGLSTFRKHSLSTMTYVPKKKTSLPEKAQEIYKE) the chain is Cytoplasmic.

It belongs to the G-protein coupled receptor 1 family.

The protein resides in the cell membrane. Its function is as follows. Receptor for cysteinyl leukotrienes mediating constriction of the microvascular smooth muscle during an inflammatory response. This response is mediated via a G-protein that activates a phosphatidylinositol-calcium second messenger system. The sequence is that of Cysteinyl leukotriene receptor 1 (CYSLTR1) from Sus scrofa (Pig).